We begin with the raw amino-acid sequence, 302 residues long: Urease accessory protein UreG (302 aa).

Basic and acidic residues-rich tracts occupy residues 1 to 32, 40 to 56, and 64 to 76; these read MHDP…DHVH, HEHE…EHGH, and HAHE…THEH. A disordered region spans residues 1-76; that stretch reads MHDPGEHGHG…EHAHGHTHEH (76 aa). 105-112 contributes to the GTP binding site; that stretch reads GPVGSGKT.

It belongs to the SIMIBI class G3E GTPase family. UreG subfamily. In terms of assembly, homodimer. UreD, UreF and UreG form a complex that acts as a GTP-hydrolysis-dependent molecular chaperone, activating the urease apoprotein by helping to assemble the nickel containing metallocenter of UreC. The UreE protein probably delivers the nickel.

It is found in the cytoplasm. In terms of biological role, facilitates the functional incorporation of the urease nickel metallocenter. This process requires GTP hydrolysis, probably effectuated by UreG. The chain is Urease accessory protein UreG from Sorangium cellulosum (strain So ce56) (Polyangium cellulosum (strain So ce56)).